A 76-amino-acid chain; its full sequence is Exodeoxyribonuclease 7 small subunit (76 aa).

It belongs to the XseB family. Heterooligomer composed of large and small subunits.

It localises to the cytoplasm. It catalyses the reaction Exonucleolytic cleavage in either 5'- to 3'- or 3'- to 5'-direction to yield nucleoside 5'-phosphates.. Bidirectionally degrades single-stranded DNA into large acid-insoluble oligonucleotides, which are then degraded further into small acid-soluble oligonucleotides. The protein is Exodeoxyribonuclease 7 small subunit of Lactiplantibacillus plantarum (strain ATCC BAA-793 / NCIMB 8826 / WCFS1) (Lactobacillus plantarum).